Here is a 324-residue protein sequence, read N- to C-terminus: tRNA U34 carboxymethyltransferase (324 aa).

Carboxy-S-adenosyl-L-methionine is bound by residues Lys92, Trp106, Lys111, Gly131, 153–155 (DPS), Met197, Tyr201, and Arg316.

The protein belongs to the class I-like SAM-binding methyltransferase superfamily. CmoB family. In terms of assembly, homotetramer.

The catalysed reaction is carboxy-S-adenosyl-L-methionine + 5-hydroxyuridine(34) in tRNA = 5-carboxymethoxyuridine(34) in tRNA + S-adenosyl-L-homocysteine + H(+). In terms of biological role, catalyzes carboxymethyl transfer from carboxy-S-adenosyl-L-methionine (Cx-SAM) to 5-hydroxyuridine (ho5U) to form 5-carboxymethoxyuridine (cmo5U) at position 34 in tRNAs. This Hahella chejuensis (strain KCTC 2396) protein is tRNA U34 carboxymethyltransferase.